The chain runs to 443 residues: Probable D-serine dehydratase (443 aa).

An N6-(pyridoxal phosphate)lysine modification is found at K106.

It belongs to the serine/threonine dehydratase family. DsdA subfamily. It depends on pyridoxal 5'-phosphate as a cofactor.

It catalyses the reaction D-serine = pyruvate + NH4(+). This chain is Probable D-serine dehydratase, found in Cupriavidus pinatubonensis (strain JMP 134 / LMG 1197) (Cupriavidus necator (strain JMP 134)).